The primary structure comprises 346 residues: Phosphoribosylformylglycinamidine cyclo-ligase (346 aa).

Belongs to the AIR synthase family.

The protein localises to the cytoplasm. The enzyme catalyses 2-formamido-N(1)-(5-O-phospho-beta-D-ribosyl)acetamidine + ATP = 5-amino-1-(5-phospho-beta-D-ribosyl)imidazole + ADP + phosphate + H(+). The protein operates within purine metabolism; IMP biosynthesis via de novo pathway; 5-amino-1-(5-phospho-D-ribosyl)imidazole from N(2)-formyl-N(1)-(5-phospho-D-ribosyl)glycinamide: step 2/2. The protein is Phosphoribosylformylglycinamidine cyclo-ligase of Colwellia psychrerythraea (strain 34H / ATCC BAA-681) (Vibrio psychroerythus).